The primary structure comprises 262 residues: MLEQMHEALQRLRQEQPVVLNITNYVSMDFLANCFLALGASPVMSVSDLELEELIGLSSAVYINIGTLDHLFIQRAYRAVDLAVRQSKPVIFDPAGSGATKIRTEVSHHILSHATIIRGNASEILSFGDVPAKTRGMDSANATHDAKDIAVALASECLCGCAVAVTGSEDFITDGKRHATVELGDPLMSRITGMGCSLTGVLAAFRSVIEDSFEATRLGVEYFSLCGMLARERCEGPGLFKAYFLDELYAADFDRMRRYHNQ.

M44 serves as a coordination point for substrate. R118 and T166 together coordinate ATP. Residue G193 participates in substrate binding.

It belongs to the Thz kinase family. Requires Mg(2+) as cofactor.

The enzyme catalyses 5-(2-hydroxyethyl)-4-methylthiazole + ATP = 4-methyl-5-(2-phosphooxyethyl)-thiazole + ADP + H(+). It participates in cofactor biosynthesis; thiamine diphosphate biosynthesis; 4-methyl-5-(2-phosphoethyl)-thiazole from 5-(2-hydroxyethyl)-4-methylthiazole: step 1/1. Its function is as follows. Catalyzes the phosphorylation of the hydroxyl group of 4-methyl-5-beta-hydroxyethylthiazole (THZ). The chain is Hydroxyethylthiazole kinase from Chlamydia felis (strain Fe/C-56) (Chlamydophila felis).